Reading from the N-terminus, the 310-residue chain is Olfactory receptor 2A7 (310 aa).

Over 1–24 (MGDNITSITEFLLLGFPVGPRIQM) the chain is Extracellular. N-linked (GlcNAc...) asparagine glycosylation occurs at Asn4. The helical transmembrane segment at 25–48 (LLFGLFSLFYVFTLLGNGTILGLI) threads the bilayer. Residues 49–56 (SLDSRLHA) lie on the Cytoplasmic side of the membrane. Residues 57-78 (PMYFFLSHLAVVDIAYACNTVP) form a helical membrane-spanning segment. Over 79 to 99 (RMLVNLLHPAKPISFAGRMMQ) the chain is Extracellular. The helical transmembrane segment at 100-119 (TFLFSTFAVTECLLLVVMSY) threads the bilayer. At 120-138 (DLYVAICHPLRYLAIMTWR) the chain is on the cytoplasmic side. A helical membrane pass occupies residues 139–157 (VCITLAVTSWTTGVLLSLI). The Extracellular segment spans residues 158–194 (HLVLLLPLPFCRPQKIYHFFCEILAVLKLACADTHIN). A helical transmembrane segment spans residues 195-218 (ENMVLAGAISGLVGPLSTIVVSYM). Residues 219–235 (CILCAILQIQSREVQRK) are Cytoplasmic-facing. Residues 236–258 (AFCTCFSHLCVIGLFYGTAIIMY) traverse the membrane as a helical segment. Residues 259-271 (VGPRYGNPKEQKK) are Extracellular-facing. The helical transmembrane segment at 272-291 (YLLLFHSLFNPMLNPLICSL) threads the bilayer. Residues 292-310 (RNSEVKNTLKRVLGVERAL) lie on the Cytoplasmic side of the membrane.

Belongs to the G-protein coupled receptor 1 family.

It localises to the cell membrane. Functionally, odorant receptor. This chain is Olfactory receptor 2A7 (OR2A7), found in Homo sapiens (Human).